We begin with the raw amino-acid sequence, 256 residues long: Large ribosomal subunit protein bL21c (256 aa).

The transit peptide at 1–55 directs the protein to the chloroplast; sequence MASATLAFSCSSLCATLKLPQNLNPLLLNVPPLSKPFSGVVSPPSLSRLSLLPVA.

Component of the chloroplast large ribosomal subunit (LSU). Mature 70S chloroplast ribosomes of higher plants consist of a small (30S) and a large (50S) subunit. The 30S small subunit contains 1 molecule of ribosomal RNA (16S rRNA) and 24 different proteins. The 50S large subunit contains 3 rRNA molecules (23S, 5S and 4.5S rRNA) and 33 different proteins.

It localises to the plastid. Its subcellular location is the chloroplast. Component of the chloroplast ribosome (chloro-ribosome), a dedicated translation machinery responsible for the synthesis of chloroplast genome-encoded proteins, including proteins of the transcription and translation machinery and components of the photosynthetic apparatus. The protein is Large ribosomal subunit protein bL21c (RPL21) of Spinacia oleracea (Spinach).